The primary structure comprises 557 residues: Phosphoribosylaminoimidazole carboxylase, chloroplastic (557 aa).

In terms of domain architecture, ATP-grasp spans 108–293; the sequence is KVALLPAWIP…QFEQHLPAVV (186 aa). 132–189 contacts ATP; it reads WDSLDIHFMIKSRRLAYDGRGNFVAKSEEELSSAVDALGGFDRGLYAEKWAPFVKELA. Positions 387–557 are AIR carboxylase catalytic subunit; it reads CSTLLGFIMG…HGWESYLKNS (171 aa).

This sequence in the C-terminal section; belongs to the AIR carboxylase family. Class I subfamily.

Its subcellular location is the plastid. It is found in the chloroplast. The enzyme catalyses 5-amino-1-(5-phospho-D-ribosyl)imidazole-4-carboxylate + H(+) = 5-amino-1-(5-phospho-beta-D-ribosyl)imidazole + CO2. It functions in the pathway purine metabolism; IMP biosynthesis via de novo pathway; 5-amino-1-(5-phospho-D-ribosyl)imidazole-4-carboxylate from 5-amino-1-(5-phospho-D-ribosyl)imidazole (carboxylase route): step 1/1. In Vigna aconitifolia (Moth bean), this protein is Phosphoribosylaminoimidazole carboxylase, chloroplastic (PURKE).